Consider the following 620-residue polypeptide: Siderophore iron transporter ARN2 (620 aa).

Residues 1–42 (MIEVPEDNRSSQTKRKNTEKNCNELMVDEKMDDDSSPRDEMK) are disordered. Over residues 16–42 (KNTEKNCNELMVDEKMDDDSSPRDEMK) the composition is skewed to basic and acidic residues. Transmembrane regions (helical) follow at residues 71–93 (IFLF…RGTY), 106–128 (LIST…FGGL), 135–152 (LTLF…TIIQ), 162–184 (AAGA…LMLS), 191–213 (WRLF…SGSV), 223–245 (WSWN…ILCM), 286–308 (VVGV…LAGG), 318–335 (IIGP…FIYW), 355–377 (VWAP…GYLY), 392–414 (TRII…LIVT), 421–438 (SYII…GLFY), 448–470 (GGII…PTIV), 491–513 (VFRI…SLYP), and 561–578 (VIVA…TFCV).

It belongs to the major facilitator superfamily.

It is found in the endosome membrane. Functionally, involved in the transport of siderophore triacestylfusarinine C and so has a role in iron homeostasis. This is Siderophore iron transporter ARN2 (ARN2) from Saccharomyces cerevisiae (strain ATCC 204508 / S288c) (Baker's yeast).